Here is an 810-residue protein sequence, read N- to C-terminus: Lon protease (810 aa).

In terms of domain architecture, Lon N-terminal spans 32–226; that stretch reads LPAIAMRSNM…RILDILARET (195 aa). 376-383 contacts ATP; sequence GPPGVGKT. The 180-residue stretch at 612-791 folds into the Lon proteolytic domain; sequence KPMIGVTTGL…EEVLEVALNE (180 aa). Residues serine 697 and lysine 740 contribute to the active site.

This sequence belongs to the peptidase S16 family. In terms of assembly, homohexamer. Organized in a ring with a central cavity.

The protein resides in the cytoplasm. The catalysed reaction is Hydrolysis of proteins in presence of ATP.. In terms of biological role, ATP-dependent serine protease that mediates the selective degradation of mutant and abnormal proteins as well as certain short-lived regulatory proteins. Required for cellular homeostasis and for survival from DNA damage and developmental changes induced by stress. Degrades polypeptides processively to yield small peptide fragments that are 5 to 10 amino acids long. Binds to DNA in a double-stranded, site-specific manner. The protein is Lon protease of Fervidobacterium nodosum (strain ATCC 35602 / DSM 5306 / Rt17-B1).